Reading from the N-terminus, the 539-residue chain is T-complex protein 1 subunit delta (539 aa).

Positions 1–28 (MPENVASRSGPPAAGPGNRGKGAYQDRD) are disordered. Arginine 19 is subject to Omega-N-methylarginine. The residue at position 21 (lysine 21) is an N6-acetyllysine. Serine 36 carries the post-translational modification Phosphoserine. Glycine 53 provides a ligand contact to ADP. Glycine 53 serves as a coordination point for ATP. Aspartate 104 is a Mg(2+) binding site. Positions 105, 106, 107, 108, 172, 173, and 174 each coordinate ADP. The ATP site is built by glycine 105 and threonine 106. Lysine 174 is an ATP binding site. Serine 184 and serine 202 each carry phosphoserine. Lysine 288, lysine 302, lysine 319, and lysine 326 each carry N6-acetyllysine. An ADP-binding site is contributed by glycine 425. A Phosphoserine modification is found at serine 444. Glutamine 510 is a binding site for ADP.

The protein belongs to the TCP-1 chaperonin family. As to quaternary structure, component of the chaperonin-containing T-complex (TRiC), a hexadecamer composed of two identical back-to-back stacked rings enclosing a protein folding chamber. Each ring is made up of eight different subunits: TCP1/CCT1, CCT2, CCT3, CCT4, CCT5, CCT6A/CCT6, CCT7, CCT8. Interacts with PACRG. Interacts with DNAAF4. Interacts with DLEC1.

The protein localises to the cytoplasm. It is found in the melanosome. The protein resides in the cytoskeleton. It localises to the microtubule organizing center. Its subcellular location is the centrosome. The protein localises to the cilium basal body. It catalyses the reaction ATP + H2O = ADP + phosphate + H(+). Component of the chaperonin-containing T-complex (TRiC), a molecular chaperone complex that assists the folding of actin, tubulin and other proteins upon ATP hydrolysis. The TRiC complex mediates the folding of WRAP53/TCAB1, thereby regulating telomere maintenance. As part of the TRiC complex may play a role in the assembly of BBSome, a complex involved in ciliogenesis regulating transports vesicles to the cilia. The chain is T-complex protein 1 subunit delta (Cct4) from Rattus norvegicus (Rat).